The following is a 133-amino-acid chain: Histone H2A (133 aa).

Residues 1–10 show a composition bias toward gly residues; the sequence is MTGGKSGGKA. A disordered region spans residues 1 to 24; that stretch reads MTGGKSGGKASGSKNAQSRSSKAG. N6-acetyllysine occurs at positions 5 and 9. Gln106 is subject to N5-methylglutamine. A Phosphoserine modification is found at Ser130. The short motif at 130–131 is the [ST]-Q motif element; sequence SQ.

The protein belongs to the histone H2A family. The nucleosome is a histone octamer containing two molecules each of H2A, H2B, H3 and H4 assembled in one H3-H4 heterotetramer and two H2A-H2B heterodimers. The octamer wraps approximately 147 bp of DNA. In terms of processing, phosphorylated to form H2AS128ph (gamma-H2A) in response to DNA double-strand breaks (DSBs) generated by exogenous genotoxic agents and by stalled replication forks. Phosphorylation is dependent on the DNA damage checkpoint kinases mec1/ATR and tel1/ATM, spreads on either side of a detected DSB site and may mark the surrounding chromatin for recruitment of proteins required for DNA damage signaling and repair. Gamma-H2A is removed from the DNA prior to the strand invasion-primer extension step of the repair process and subsequently dephosphorylated. Dephosphorylation is necessary for efficient recovery from the DNA damage checkpoint. Acetylated by esa1 to form H2AK4ac and H2AK7ac.

The protein localises to the nucleus. It is found in the chromosome. Its function is as follows. Core component of nucleosome which plays a central role in DNA double strand break (DSB) repair. Nucleosomes wrap and compact DNA into chromatin, limiting DNA accessibility to the cellular machineries which require DNA as a template. Histones thereby play a central role in transcription regulation, DNA repair, DNA replication and chromosomal stability. DNA accessibility is regulated via a complex set of post-translational modifications of histones, also called histone code, and nucleosome remodeling. In Aspergillus clavatus (strain ATCC 1007 / CBS 513.65 / DSM 816 / NCTC 3887 / NRRL 1 / QM 1276 / 107), this protein is Histone H2A (hta1).